Consider the following 189-residue polypeptide: Putative ankyrin repeat protein L38 (189 aa).

One copy of the ANK repeat lies at 108–137 (YGKTPLITAIKSGNCIMVKKLIDYGADFNK).

The protein is Putative ankyrin repeat protein L38 of Acanthamoeba polyphaga mimivirus (APMV).